Reading from the N-terminus, the 408-residue chain is MSFFDGIPVAPPIEVFHKNKMYLDETAPVKVNLTIGAYRTEEGQPWVLPVVHETEVEIANDTSLNHEYLPVLGHEGFRKAATELVLGAESPAIKEERSFGVQCLSGTGALRAGAEFLASVCNMKTVYVSNPTWGNHKLVFKKAGFTTVADYTFWDYDNKRVHIEKFLSDLESAPEKSVIILHGCAHNPTGMDPTQEQWKLVAEVIKRKNLFTFFDIAYQGFASGDPAADAWAIRYFVDQGMEMVVSQSFAKNFGLYNERVGNLTVVVNNPAVIAGFQSQMSLVIRANWSNPPAHGARIVHKVLTTPARREQWNQSIQAMSSRIKQMRAALLRHLMDLGTPGTWDHIIQQIGMFSYTGLTSAQVDHLIANHKVFLLRDGRINICGLNTKNVEYVAKAIDETVRAVKSNI.

3 residues coordinate L-aspartate: glycine 36, tryptophan 133, and asparagine 187. N6-(pyridoxal phosphate)lysine is present on lysine 251. Arginine 379 lines the L-aspartate pocket.

The protein belongs to the class-I pyridoxal-phosphate-dependent aminotransferase family. In terms of assembly, homodimer. The cofactor is pyridoxal 5'-phosphate. In terms of tissue distribution, expressed in all somatic tissues including the nervous system.

The protein localises to the cytoplasm. The catalysed reaction is L-aspartate + 2-oxoglutarate = oxaloacetate + L-glutamate. Biosynthesis of L-glutamate from L-aspartate. Important regulator of levels of glutamate, the major excitatory neurotransmitter of the central nervous system. This Caenorhabditis elegans protein is Aspartate aminotransferase, cytoplasmic.